We begin with the raw amino-acid sequence, 320 residues long: GMP reductase (320 aa).

Cysteine 174 (thioimidate intermediate) is an active-site residue. Isoleucine 203 to cysteine 226 lines the NADP(+) pocket.

It belongs to the IMPDH/GMPR family. GuaC type 2 subfamily.

The catalysed reaction is IMP + NH4(+) + NADP(+) = GMP + NADPH + 2 H(+). Its function is as follows. Catalyzes the irreversible NADPH-dependent deamination of GMP to IMP. It functions in the conversion of nucleobase, nucleoside and nucleotide derivatives of G to A nucleotides, and in maintaining the intracellular balance of A and G nucleotides. The chain is GMP reductase from Mycoplasma mycoides subsp. mycoides SC (strain CCUG 32753 / NCTC 10114 / PG1).